The sequence spans 190 residues: Holliday junction branch migration complex subunit RuvA (190 aa).

The domain I stretch occupies residues 1 to 65 (MIGNLRGIVD…ENVTQLYGFI (65 aa)). The interval 66–143 (SKEEQQCLRL…KLEINNNHFH (78 aa)) is domain II. Residues 144–147 (SISE) form a flexible linker region. Residues 147 to 190 (EDALSALINLGYERTKAYDTIKKIEDESPNLDTKDIIRMALKTI) form a domain III region.

Belongs to the RuvA family. In terms of assembly, homotetramer. Forms an RuvA(8)-RuvB(12)-Holliday junction (HJ) complex. HJ DNA is sandwiched between 2 RuvA tetramers; dsDNA enters through RuvA and exits via RuvB. An RuvB hexamer assembles on each DNA strand where it exits the tetramer. Each RuvB hexamer is contacted by two RuvA subunits (via domain III) on 2 adjacent RuvB subunits; this complex drives branch migration. In the full resolvosome a probable DNA-RuvA(4)-RuvB(12)-RuvC(2) complex forms which resolves the HJ.

The protein resides in the cytoplasm. The RuvA-RuvB-RuvC complex processes Holliday junction (HJ) DNA during genetic recombination and DNA repair, while the RuvA-RuvB complex plays an important role in the rescue of blocked DNA replication forks via replication fork reversal (RFR). RuvA specifically binds to HJ cruciform DNA, conferring on it an open structure. The RuvB hexamer acts as an ATP-dependent pump, pulling dsDNA into and through the RuvAB complex. HJ branch migration allows RuvC to scan DNA until it finds its consensus sequence, where it cleaves and resolves the cruciform DNA. In Wolbachia pipientis subsp. Culex pipiens (strain wPip), this protein is Holliday junction branch migration complex subunit RuvA.